The sequence spans 331 residues: Septin homolog spn2 (331 aa).

The Septin-type G domain occupies 29-301; the sequence is RGFQFNVMVV…EKFRFKQLSS (273 aa). The interval 39–46 is G1 motif; the sequence is GPSGSGKS. GTP contacts are provided by residues 39-46, Thr73, Gly99, 179-187, Gly235, and Arg250; these read GPSGSGKS and KSDSLTLEE. Residues 96-99 form a G3 motif region; the sequence is DTPG. A G4 motif region spans residues 178–181; sequence AKSD. Residues 311–331 are disordered; the sequence is RMGSPAPVYPSEPHLHTATAQ.

Belongs to the TRAFAC class TrmE-Era-EngA-EngB-Septin-like GTPase superfamily. Septin GTPase family. In terms of assembly, component of the septin complex composed of two copies of each spn1, spn2, spn3 and spn4. Component of the sporulation-specific septin complex composed of at least spn2, spn5, spn6 and spn7.

The protein resides in the cytoplasm. It localises to the cell cortex. Its subcellular location is the forespore membrane. Plays a role in the cell cycle. Involved in a late stage of septum formation leading to the separation of the daughter cells. Involved in the correct orientation of forespore membrane extension during sporulation. Binds phosphatidylinositol 4-phosphate. This is Septin homolog spn2 (spn2) from Schizosaccharomyces pombe (strain 972 / ATCC 24843) (Fission yeast).